The following is a 151-amino-acid chain: Ribonuclease P protein component (151 aa).

Positions 1–62 are disordered; it reads MDEKDLATQP…LKGDSAFRRL (62 aa). Positions 28-48 are enriched in low complexity; the sequence is GAQGAEAQAAEGPLAAHAQGA.

The protein belongs to the RnpA family. Consists of a catalytic RNA component (M1 or rnpB) and a protein subunit.

The catalysed reaction is Endonucleolytic cleavage of RNA, removing 5'-extranucleotides from tRNA precursor.. RNaseP catalyzes the removal of the 5'-leader sequence from pre-tRNA to produce the mature 5'-terminus. It can also cleave other RNA substrates such as 4.5S RNA. The protein component plays an auxiliary but essential role in vivo by binding to the 5'-leader sequence and broadening the substrate specificity of the ribozyme. This chain is Ribonuclease P protein component, found in Thermus oshimai.